Here is a 733-residue protein sequence, read N- to C-terminus: Phosphoribosylformylglycinamidine synthase subunit PurL (733 aa).

H44 is a catalytic residue. ATP is bound by residues Y47 and K86. E88 contacts Mg(2+). Residues 89 to 92 (SHNH) and R111 each bind substrate. H90 serves as the catalytic Proton acceptor. Mg(2+) is bound at residue D112. Q240 contacts substrate. D268 provides a ligand contact to Mg(2+). Residue 312-314 (ESQ) coordinates substrate. ATP-binding residues include D496 and G533. N534 is a binding site for Mg(2+). Position 536 (S536) interacts with substrate.

This sequence belongs to the FGAMS family. Monomer. Part of the FGAM synthase complex composed of 1 PurL, 1 PurQ and 2 PurS subunits.

The protein resides in the cytoplasm. The catalysed reaction is N(2)-formyl-N(1)-(5-phospho-beta-D-ribosyl)glycinamide + L-glutamine + ATP + H2O = 2-formamido-N(1)-(5-O-phospho-beta-D-ribosyl)acetamidine + L-glutamate + ADP + phosphate + H(+). The protein operates within purine metabolism; IMP biosynthesis via de novo pathway; 5-amino-1-(5-phospho-D-ribosyl)imidazole from N(2)-formyl-N(1)-(5-phospho-D-ribosyl)glycinamide: step 1/2. In terms of biological role, part of the phosphoribosylformylglycinamidine synthase complex involved in the purines biosynthetic pathway. Catalyzes the ATP-dependent conversion of formylglycinamide ribonucleotide (FGAR) and glutamine to yield formylglycinamidine ribonucleotide (FGAM) and glutamate. The FGAM synthase complex is composed of three subunits. PurQ produces an ammonia molecule by converting glutamine to glutamate. PurL transfers the ammonia molecule to FGAR to form FGAM in an ATP-dependent manner. PurS interacts with PurQ and PurL and is thought to assist in the transfer of the ammonia molecule from PurQ to PurL. This Wolinella succinogenes (strain ATCC 29543 / DSM 1740 / CCUG 13145 / JCM 31913 / LMG 7466 / NCTC 11488 / FDC 602W) (Vibrio succinogenes) protein is Phosphoribosylformylglycinamidine synthase subunit PurL.